Here is a 438-residue protein sequence, read N- to C-terminus: Acid phosphatase type 7 (438 aa).

A signal peptide spans 1–26 (MHPLPGYWSCYCLLLLFSLGVQGSLG). Residues aspartate 141, aspartate 170, and tyrosine 173 each coordinate Fe cation. Aspartate 170 lines the Zn(2+) pocket. Asparagine 205 is a binding site for Zn(2+). Asparagine 211 is a glycosylation site (N-linked (GlcNAc...) asparagine). The Zn(2+) site is built by histidine 286 and histidine 333. Histidine 335 is a Fe cation binding site. N-linked (GlcNAc...) asparagine glycans are attached at residues asparagine 350 and asparagine 404.

This sequence belongs to the metallophosphoesterase superfamily. Purple acid phosphatase family. The cofactor is Fe cation. Zn(2+) serves as cofactor.

Its subcellular location is the secreted. The catalysed reaction is a phosphate monoester + H2O = an alcohol + phosphate. The chain is Acid phosphatase type 7 from Homo sapiens (Human).